The primary structure comprises 323 residues: Pantothenate kinase (323 aa).

Positions 1–12 (MAEQNAASTTGV) are enriched in polar residues. The segment at 1–24 (MAEQNAASTTGVKPSPRTPDFSPY) is disordered. Position 108 to 115 (108 to 115 (GSVAVGKS)) interacts with ATP.

Belongs to the prokaryotic pantothenate kinase family.

The protein localises to the cytoplasm. It catalyses the reaction (R)-pantothenate + ATP = (R)-4'-phosphopantothenate + ADP + H(+). Its pathway is cofactor biosynthesis; coenzyme A biosynthesis; CoA from (R)-pantothenate: step 1/5. The chain is Pantothenate kinase from Corynebacterium glutamicum (strain R).